Consider the following 62-residue polypeptide: MACEKPVKVRDPTTGKEVELVPIKVWQLAPKGRKGVKIGLFKSPETGKYFRAKVPDDYPICS.

The protein belongs to the Cren7 family. Monomer. Methylated at multiple sites, to varying extents.

It is found in the chromosome. Its subcellular location is the cytoplasm. Its function is as follows. A chromatin protein, binds double-stranded DNA without sequence specificity. Constrains negative DNA supercoils. The protein is Chromatin protein Cren7 1 (cren7-1) of Hyperthermus butylicus (strain DSM 5456 / JCM 9403 / PLM1-5).